The chain runs to 393 residues: Matrix metalloproteinase-23 (393 aa).

Residues 1–20 (MGRGACVPSAASGAGDRARQ) are Cytoplasmic-facing. Positions 1–81 (MGRGACVPSA…PHPPVPRRRR (81 aa)) are excised as a propeptide. A helical; Signal-anchor for type II membrane protein transmembrane segment spans residues 21–41 (LGAVLGALCLFPALVLLAWPG). The Lumenal segment spans residues 42-393 (TPANGAGARV…TYSWRIRVRS (352 aa)). Residues 60–79 (TSGVLASGSLGPPHPPVPRR) are disordered. N-linked (GlcNAc...) asparagine glycans are attached at residues N95 and N151. H214 contacts Zn(2+). E215 is an active-site residue. 2 residues coordinate Zn(2+): H218 and H224. N-linked (GlcNAc...) asparagine glycosylation occurs at N235. One can recognise a ShKT domain in the interval 258–292 (CLDRLFVCASWARRGFCDTRRRLMKRLCPSSCDFC). 3 disulfide bridges follow: C258-C292, C265-C285, and C274-C289. The region spanning 298 to 383 (PTVAATPPPP…VVRRRQRVLS (86 aa)) is the Ig-like C2-type domain. The N-linked (GlcNAc...) asparagine glycan is linked to N319. The cysteines at positions 324 and 373 are disulfide-linked.

This sequence belongs to the peptidase M10A family. Zn(2+) is required as a cofactor. In terms of processing, N-glycosylated. Post-translationally, proteolytic cleavage might yield an active form.

It localises to the membrane. The protein resides in the endoplasmic reticulum membrane. Protease. May regulate the surface expression of some potassium channels by retaining them in the endoplasmic reticulum. The protein is Matrix metalloproteinase-23 (MMP23) of Bos taurus (Bovine).